The chain runs to 71 residues: MGLLGAAIVAGLAAVGGAIAVAIIVKSTIEGVTRQPELKGTLQTLMFIGVPLAEAVPIIAIVMGFLIMGNA.

2 helical membrane-spanning segments follow: residues 5–25 (GAAIVAGLAAVGGAIAVAIIV) and 47–67 (FIGVPLAEAVPIIAIVMGFLI).

The protein belongs to the ATPase C chain family. In terms of assembly, F-type ATPases have 2 components, F(1) - the catalytic core - and F(0) - the membrane proton channel. F(1) has five subunits: alpha(3), beta(3), gamma(1), delta(1), epsilon(1). F(0) has three main subunits: a(1), b(2) and c(10-14). The alpha and beta chains form an alternating ring which encloses part of the gamma chain. F(1) is attached to F(0) by a central stalk formed by the gamma and epsilon chains, while a peripheral stalk is formed by the delta and b chains.

Its subcellular location is the cell membrane. In terms of biological role, f(1)F(0) ATP synthase produces ATP from ADP in the presence of a proton or sodium gradient. F-type ATPases consist of two structural domains, F(1) containing the extramembraneous catalytic core and F(0) containing the membrane proton channel, linked together by a central stalk and a peripheral stalk. During catalysis, ATP synthesis in the catalytic domain of F(1) is coupled via a rotary mechanism of the central stalk subunits to proton translocation. Its function is as follows. Key component of the F(0) channel; it plays a direct role in translocation across the membrane. A homomeric c-ring of between 10-14 subunits forms the central stalk rotor element with the F(1) delta and epsilon subunits. The chain is ATP synthase subunit c from Alkalihalobacillus alcalophilus (Bacillus alcalophilus).